The primary structure comprises 348 residues: Tocopherol O-methyltransferase, chloroplastic (348 aa).

The transit peptide at methionine 1–alanine 51 directs the protein to the chloroplast. N-acetylalanine is present on alanine 52. The tract at residues valine 130–glycine 139 is SAM motif I. Residues glycine 193 to methionine 201 form an SAM motif II region. Positions valine 220–isoleucine 229 are SAM motif III.

This sequence belongs to the class I-like SAM-binding methyltransferase superfamily. gTMT family.

It localises to the plastid. The protein localises to the chloroplast. It catalyses the reaction gamma-tocopherol + S-adenosyl-L-methionine = (+)-alpha-tocopherol + S-adenosyl-L-homocysteine + H(+). The catalysed reaction is delta-tocotrienol + S-adenosyl-L-methionine = beta-tocotrienol + S-adenosyl-L-homocysteine + H(+). It carries out the reaction gamma-tocotrienol + S-adenosyl-L-methionine = alpha-tocotrienol + S-adenosyl-L-homocysteine + H(+). The enzyme catalyses delta-tocopherol + S-adenosyl-L-methionine = beta-tocopherol + S-adenosyl-L-homocysteine + H(+). It functions in the pathway cofactor biosynthesis; tocopherol biosynthesis. Its function is as follows. Involved in the synthesis of tocopherol (vitamin E). Methylates gamma- and delta-tocopherol to form beta- and alpha-tocopherol, respectively. This is Tocopherol O-methyltransferase, chloroplastic (VTE4) from Arabidopsis thaliana (Mouse-ear cress).